The primary structure comprises 269 residues: UPF0329 protein ECU04_1660 (269 aa).

Residues 1-12 are compositionally biased toward basic and acidic residues; the sequence is MEERERGKEKGS. The interval 1-74 is disordered; it reads MEERERGKEK…SPKEKSKGEE (74 aa). Basic residues predominate over residues 13–23; sequence KGKGRKKRGKK. The segment covering 24-36 has biased composition (basic and acidic residues); it reads GAGEAKEESKEED. Residues 37–51 show a composition bias toward acidic residues; that stretch reads RGEEEEESVEADVPV.

This sequence belongs to the UPF0329 family.

This is UPF0329 protein ECU04_1660 from Encephalitozoon cuniculi (strain GB-M1) (Microsporidian parasite).